The sequence spans 224 residues: Deoxyribose-phosphate aldolase (224 aa).

The active-site Proton donor/acceptor is aspartate 92. Lysine 155 (schiff-base intermediate with acetaldehyde) is an active-site residue. Catalysis depends on lysine 184, which acts as the Proton donor/acceptor.

It belongs to the DeoC/FbaB aldolase family. DeoC type 1 subfamily.

Its subcellular location is the cytoplasm. It catalyses the reaction 2-deoxy-D-ribose 5-phosphate = D-glyceraldehyde 3-phosphate + acetaldehyde. It functions in the pathway carbohydrate degradation; 2-deoxy-D-ribose 1-phosphate degradation; D-glyceraldehyde 3-phosphate and acetaldehyde from 2-deoxy-alpha-D-ribose 1-phosphate: step 2/2. Catalyzes a reversible aldol reaction between acetaldehyde and D-glyceraldehyde 3-phosphate to generate 2-deoxy-D-ribose 5-phosphate. This chain is Deoxyribose-phosphate aldolase, found in Clostridium perfringens (strain SM101 / Type A).